The sequence spans 239 residues: Lipoprotein-releasing system ATP-binding protein LolD (239 aa).

Positions 9–239 constitute an ABC transporter domain; the sequence is LQVQHVSKHY…AATSPTGLAE (231 aa). 45–52 is a binding site for ATP; the sequence is GSSGSGKS.

It belongs to the ABC transporter superfamily. Lipoprotein translocase (TC 3.A.1.125) family. As to quaternary structure, the complex is composed of two ATP-binding proteins (LolD) and two transmembrane proteins (LolC and LolE).

It is found in the cell inner membrane. Functionally, part of the ABC transporter complex LolCDE involved in the translocation of mature outer membrane-directed lipoproteins, from the inner membrane to the periplasmic chaperone, LolA. Responsible for the formation of the LolA-lipoprotein complex in an ATP-dependent manner. The protein is Lipoprotein-releasing system ATP-binding protein LolD of Shewanella frigidimarina (strain NCIMB 400).